Reading from the N-terminus, the 342-residue chain is Ribosomal RNA small subunit methyltransferase H (342 aa).

Residues 62 to 64, Asp-82, Phe-108, Asp-129, and Gln-136 contribute to the S-adenosyl-L-methionine site; that span reads GGH. The segment at 280–319 is disordered; it reads RHSKGQYPEDENLPMPPKRPRYFSKPKRVGPSKAEISHNP. The span at 297 to 309 shows a compositional bias: basic residues; it reads KRPRYFSKPKRVG.

Belongs to the methyltransferase superfamily. RsmH family.

It is found in the cytoplasm. The catalysed reaction is cytidine(1402) in 16S rRNA + S-adenosyl-L-methionine = N(4)-methylcytidine(1402) in 16S rRNA + S-adenosyl-L-homocysteine + H(+). In terms of biological role, specifically methylates the N4 position of cytidine in position 1402 (C1402) of 16S rRNA. This Psychrobacter cryohalolentis (strain ATCC BAA-1226 / DSM 17306 / VKM B-2378 / K5) protein is Ribosomal RNA small subunit methyltransferase H.